We begin with the raw amino-acid sequence, 154 residues long: MAARVCCQLDPARDVLCLRPVGAESRGRPLPGPLGTLPPASPPAVPTDHGAHLSLRGLPVCAFSSAGPCALRFTSARRMETTVNAHGNLPKVLHKRTLGLSAMSTTDLEAYFKDCVFNEWEELGEEIRLKVFVLGGCRHKLVCSPAPCNFFTSA.

Residues 28 to 48 (RPLPGPLGTLPPASPPAVPTD) form a disordered region. The segment at 68–117 (PCALRFTSARRMETTVNAHGNLPKVLHKRTLGLSAMSTTDLEAYFKDCVF) is mitochondrial targeting sequence.

Belongs to the orthohepadnavirus protein X family. May form homodimer. May interact with host CEBPA, CFLAR, CREB1, DDB1, E4F1, HBXIP, HSPD1/HSP60, NFKBIA, POLR2E and SMAD4. Interacts with host SMC5-SMC6 complex and induces its degradation. Interacts with host TRPC4AP; leading to prevent ubiquitination of TRPC4AP. Interacts with host PLSCR1; this interaction promotes ubiquitination and degradation of HBx and impairs HBx-mediated cell proliferation. Post-translationally, a fraction may be phosphorylated in insect cells and HepG2 cells, a human hepatoblastoma cell line. Phosphorylated in vitro by host protein kinase C or mitogen-activated protein kinase. N-acetylated in insect cells.

Its subcellular location is the host cytoplasm. The protein localises to the host nucleus. It is found in the host mitochondrion. In terms of biological role, multifunctional protein that plays a role in silencing host antiviral defenses and promoting viral transcription. Does not seem to be essential for HBV infection. May be directly involved in development of cirrhosis and liver cancer (hepatocellular carcinoma). Most of cytosolic activities involve modulation of cytosolic calcium. The effect on apoptosis is controversial depending on the cell types in which the studies have been conducted. May induce apoptosis by localizing in mitochondria and causing loss of mitochondrial membrane potential. May also modulate apoptosis by binding host CFLAR, a key regulator of the death-inducing signaling complex (DISC). Promotes viral transcription by using the host E3 ubiquitin ligase DDB1 to target the SMC5-SMC6 complex to proteasomal degradation. This host complex would otherwise bind to viral episomal DNA, and prevents its transcription. Moderately stimulates transcription of many different viral and cellular transcription elements. Promoters and enhancers stimulated by HBx contain DNA binding sites for NF-kappa-B, AP-1, AP-2, c-EBP, ATF/CREB, or the calcium-activated factor NF-AT. The protein is Protein X of Hepatitis B virus genotype B2 subtype adw (isolate China/patient4/1996) (HBV-B).